The primary structure comprises 3072 residues: MHHGSGPQNVQHQLQRSRSFTGSEEEQPAHPNLPPSPAAPFAPSASPSAPQSPGYQIQQLMSRSPVAGQNVNITLQNVGPVVGGNQQITLAPLPLPNPTSPGFQFGAQQRRFEHGSPSYIQVTSPMSQQVQTQSPTQPSPGPGQTLQNVRAGAPGPGLGICSNSPTGGFVDASVLVRQISLSPSSGGHFVFQEAPGLTQMAQGAQVQLQHSGAPITVRERRLSQPHAQSGGTIHHLGPQSPAAAGGTGLQPLASPNHITTASLPPQISSIIQGQLIQQQQQVLQGQPMNRSLGFERTPGVLLPGVGGPSAFGMTSPPPPTSPSRTTMPPGLSSVPLTSMGSSGMKKVPKKLEEIPPASQEMAQMRKQCLDYHYKEMEALKEVFKEYLIELFFLQHLQGNMMDFLAFKKKHYAPLQAYLRQNDLDIEEEEEEEEEEEGKSEVINDEVKVVTGKDGQTGTPVAIATQLPPNVSAAFSSQQQPFQHQSLTGSLVVGPGSATEADPFKRQQVMPPTEQSKRPRLEVGHPGVVFQHPGVNAGVPLQQLMPTVQGGMPPTPQATQLTGQKQSQQQYDPSTGPPVQNAASLHTPPPQLPARLPPASVPATALPSTLQFSQQSQMVEASTQLQIPVKTQQLNAPIPAPLPSQLPAPSSQPAQPALHVPMPGKAQMQTSQLSSQTQTVASTRPPLDSAQPCQRSLPTSSSSSSLVPVSGSGPGPSPARSSPVNRPSSATNKALSPITSRSPGVAVSAPPKPQSPAQNAASSQDGSQDKLAEQITLENQIHQRIADLRKEGLWSLRRLPKLQEAPRPKSHWDYLLEEMQWMATDFAQERRWKLAAAKKLVRTVARHHEEKKLREERGKKEEQSRLRRIAATTAREIEYFWSNIEQVVEIKLQVELEEKRKKALNLQKVSRRGKESRLKGFDTSPEHSLDLGISGRKRKASTSLTDDEVEDEEETIEEEEAHEGLVDHHTELTNLAKEAELPLIDLMKLYEGAFLPNFQWPQPEPDHEESSGEEDVEDCPSDRESRRDSVLIDSLFIMDQFKAAERMSIGKSNTKDITEVTAVAEAILPKGSARVTTAVKFSAPSLLYGALRDYQKIGLDWLAKLYRKNLNGILADEAGLGKTVQIIAFFAHLACNEGNWGPHLVVMRSCNILKWELELKRWCPGLKTLSYVGSHRELKAKRQEWTEPNNFHICITSYKQFFRGYTAFSRVHWKCLVVDEMQRVKGMTERHWEAIFKLQSQQRLLLIDVPLHNTFLELWTMVHFLIPGISRPYLSFPLKAPNEENQDYYHKMVIRLHRVTQPFILRRTKRDVEKQLTRKYEHVLKCRLSSRQKALYEDVILQPRTQEALKSGHFVSVLSVLTRLQRICNHPGLVEPRVPGSSFAAGSLQYKSASLILRVLEREFWKETDLSIFDLIGLENKITRHEAELLCKKKVTRKLMEEVFASPPPSARPAAVKLKASRLFQPVQYGQKPEGRTVAFPSTHPPRMANTNTSTATPQGQVRGRPPIATFSANPDTKGGEVVKIAQLASIAGPQSRVAQPETPVTLQFQGNKFTLSHSQLRQLTAGQPLQLQGSVLQIVSAPGQPYLRAPGPVVMQTVSQAGAVHSTLGSKPPTSGPSPAPLTPQVGVPGRVAVSAMAVGEPGLASKPASPAAGPTQEEKSRLLKERLDQIHFINERRCSQAPVYGRDLLRICSLPGRRKRPLCWSLDSNFGKGPKGVNYDMSLSKSEGDLILTLSQESLQDVLGRVACVIPPVVATPPSLWVARPPSLYSSRLRALRQCLREHTGPYHRQLQQLTALRSLQFPELRLVQFDSGKLEALAILLQKLKSEGRRVLILSQMVLMLDILEMFLNFHYLTYVRIDENANSEQRQELMRSFNRDRRIFCALLSTHSRATGINLVEADTVVFYDNDLNPVMDAKAQEWCDRIGRCKDIHIYRLVSGNSIEEKLLKNGTKDLIREVAAQGNDYSMAFLTQRTIQELFEVYSPMDDTGFPVKAEEFVVLSQEPSVSETIAPKIARPFIEALKSIECLEEDAQRSTEEAVPGSSSVAVSSDSDGSRYDEEPSQLEELADFMEQLTPIEKYALNYLELFHTTTEQEKERISEDLVMASMKDWETRNARALQEREARLQLEQEEAELLTYTREDAYTMEYVYEDADGQTEVMPLWTPPTPPQDDNDIYIDSVMCLMYETTPIPEAKLPPVYVRKERKRHKTDPSAAGRKKKQRHGEAVVPPRSLFDRATPGMLKIRREGKEQKKNLLLKQQTPFAKPLPTYVKSSGEPAQDSPDWLIGEDWALLQAVKQLLELPLNLTIVSPAHTPNWDLVSDVVNSCSRIYRSSKQCRNRYENVIIPREEGKSKNNRPLRTSQIYAQDENATHTQLYTSHFELMKMTAGKRSPPIKPLLGMNPFQKNPKHASVLAESGINYDKPLPPIQVASLRAERIAKEKKALADQQKAQQPPVTQPPPQQQQQQQQQQQQQQQQQQPPPPPQQPPPPVPQPQAASSQTPAGQPAVQPQPQPQVQTQPQPVQPQSKGQPTMTTVGSAAVLAGTIKTSVTGTSIPTGTVSGNVIVNTIAGVPAATFQSINKRLASPVAPGTLTTSGGSAPAQVVHTQQRAVGSPATATTDLVSMTTTQGVRAVTSVTASAVVTTNLTPVQTPTRSLVTQVSQATGVQLPGKTITPAAHFQLLRQQQQQQQQQQQQQQTSQVQVPQLQSQAQSPAQIKAVSKLGPEHIIKMQKQKMQLPPQPPPPQAQPGPPQQPAQVQVQTPQPPQQQQSPQLTTVTAPRPGALLTGTTVTNLQVARLTRVPTSQLQAQGQMQTQTPQPAQVALAKPPVVSVPAAVVSSPGVTTLPMNVAGISVAIGQPQKTAGQTVVAQPVNVQQLLKYKQQTAVQQQKAIQPQVAQGQAAVQQKLTTQQITTQGPQQKVAYAAQPALKTQFLTTPISQAQKLAGTQQVQTQIQVAKLPQVVQQQTPVASIQQVASASQQASPQTVTLTQATAAGQQVQMIPTVTATAQLVQQKLIQQQVVTTASASLQTPGGPSPAQLPASSDSPSQQPKLQMRVPAVRLKTPTKPPCQ.

Over residues 1–22 the composition is skewed to polar residues; that stretch reads MHHGSGPQNVQHQLQRSRSFTG. Disordered regions lie at residues 1–55, 125–149, and 222–250; these read MHHG…SPGY, PMSQ…LQNV, and LSQP…TGLQ. Residues 31–40 show a composition bias toward pro residues; the sequence is PNLPPSPAAP. 2 stretches are compositionally biased toward low complexity: residues 41-53 and 125-136; these read FAPS…PQSP and PMSQQVQTQSPT. A phosphoserine mark is found at serine 52 and serine 134. Phosphoserine occurs at positions 315 and 321. 3 disordered regions span residues 485-519, 544-601, and 635-769; these read SLTG…KRPR, MPTV…ASVP, and APIP…SQDK. Residues 556-569 show a composition bias toward low complexity; sequence QATQLTGQKQSQQQ. Positions 570–583 are enriched in polar residues; that stretch reads YDPSTGPPVQNAAS. Residues 586-599 show a composition bias toward pro residues; it reads TPPPQLPARLPPAS. 3 stretches are compositionally biased toward low complexity: residues 646 to 657, 668 to 682, and 695 to 710; these read PAPSSQPAQPAL, QTSQ…VAST, and SLPT…PVSG. Composition is skewed to polar residues over residues 724 to 741 and 754 to 765; these read NRPS…TSRS and SPAQNAASSQDG. Serine 735, serine 741, and serine 754 each carry phosphoserine. The HSA domain maps to 798 to 870; it reads LPKLQEAPRP…EQSRLRRIAA (73 aa). Basic and acidic residues predominate over residues 914 to 928; that stretch reads ESRLKGFDTSPEHSL. Disordered regions lie at residues 914-952 and 997-1024; these read ESRL…EDEE and FQWP…DRES. Threonine 922 is modified (phosphothreonine). Serine 923, serine 927, and serine 940 each carry phosphoserine. Threonine 944 bears the Phosphothreonine mark. The interactions with RUVBL1 and RUVBL2 stretch occupies residues 950–1364; it reads DEEETIEEEE…SVLSVLTRLQ (415 aa). Phosphoserine occurs at positions 1009 and 1010. One can recognise a Helicase ATP-binding domain in the interval 1102 to 1267; that stretch reads AKLYRKNLNG…WTMVHFLIPG (166 aa). An ATP-binding site is contributed by 1115–1122; sequence DEAGLGKT. The short motif at 1218–1221 is the DEAD box-like element; sequence DEMQ. Lysine 1471 is subject to N6-acetyllysine. The disordered stretch occupies residues 1473–1503; the sequence is EGRTVAFPSTHPPRMANTNTSTATPQGQVRG. The segment covering 1488–1499 has biased composition (polar residues); sequence ANTNTSTATPQG. A phosphoserine mark is found at serine 1646 and serine 1650. The Helicase C-terminal domain occupies 1815–1972; it reads KLEALAILLQ…GNDYSMAFLT (158 aa). Disordered regions lie at residues 2033 to 2062 and 2203 to 2227; these read AQRS…DEEP and KERK…GEAV. Over residues 2043–2053 the composition is skewed to low complexity; that stretch reads GSSSVAVSSDS. N6-acetyllysine is present on residues lysine 2265 and lysine 2272. Residues 2276 to 2345 form the Myb-like domain; sequence EPAQDSPDWL…QCRNRYENVI (70 aa). The interval 2440 to 2699 is interaction with ZNF42; sequence KEKKALADQQ…QQQQQQQQQT (260 aa). The interval 2441–2534 is disordered; that stretch reads EKKALADQQK…PQSKGQPTMT (94 aa). 2 stretches are compositionally biased toward low complexity: residues 2446 to 2455 and 2463 to 2478; these read ADQQKAQQPP and QQQQ…QQQQ. Residues 2479–2493 show a composition bias toward pro residues; that stretch reads QPPPPPQQPPPPVPQ. Residues 2494-2526 are compositionally biased toward low complexity; that stretch reads PQAASSQTPAGQPAVQPQPQPQVQTQPQPVQPQ. At serine 2614 the chain carries Phosphoserine. Disordered regions lie at residues 2734–2790 and 3028–3072; these read QKMQ…TGTT and ASLQ…PPCQ. Residues 2739–2754 are compositionally biased toward pro residues; the sequence is PPQPPPPQAQPGPPQQ. Over residues 2755 to 2775 the composition is skewed to low complexity; it reads PAQVQVQTPQPPQQQQSPQLT. Residues 3042–3053 are compositionally biased toward polar residues; it reads PASSDSPSQQPK.

Belongs to the SNF2/RAD54 helicase family. SWR1 subfamily. In terms of assembly, component of the NuA4 histone acetyltransferase complex which contains the catalytic subunit KAT5/TIP60 and the subunits EP400, TRRAP/PAF400, BRD8/SMAP, EPC1, DMAP1/DNMAP1, RUVBL1/TIP49, RUVBL2, ING3, actin, ACTL6A/BAF53A, MORF4L1/MRG15, MORF4L2/MRGX, MRGBP, YEATS4/GAS41, VPS72/YL1 and MEAF6. May also participate in the formation of NuA4 related complexes which lack the KAT5/TIP60 catalytic subunit, but which include the SWI/SNF related protein SRCAP. The NuA4 complex interacts with MYC. EP400 interacts with TRRAP, RUVBL1 and RUVBL2. Component of a SWR1-like complex. Interacts with ZNF42. Interacts with PHF5A. As to expression, expressed in brain, thymus, lung, liver, spleen, kidney, colon and bone marrow.

The protein localises to the nucleus. In terms of biological role, component of the NuA4 histone acetyltransferase complex which is involved in transcriptional activation of select genes principally by acetylation of nucleosomal histones H4 and H2A. This modification may both alter nucleosome - DNA interactions and promote interaction of the modified histones with other proteins which positively regulate transcription. May be required for transcriptional activation of E2F1 and MYC target genes during cellular proliferation. The NuA4 complex ATPase and helicase activities seem to be, at least in part, contributed by the association of RUVBL1 and RUVBL2 with EP400. Component of a SWR1-like complex that specifically mediates the removal of histone H2A.Z/H2AZ1 from the nucleosome. Regulates transcriptional activity of ZNF42. This Mus musculus (Mouse) protein is E1A-binding protein p400 (Ep400).